The primary structure comprises 100 residues: Acylphosphatase (100 aa).

Positions 14-100 (RWRFFVEGKV…TGADWFEIRS (87 aa)) constitute an Acylphosphatase-like domain. Active-site residues include Arg29 and Asn47.

The protein belongs to the acylphosphatase family.

It carries out the reaction an acyl phosphate + H2O = a carboxylate + phosphate + H(+). This chain is Acylphosphatase (acyP), found in Synechococcus sp. (strain WH7803).